The chain runs to 258 residues: 1-(5-phosphoribosyl)-5-[(5-phosphoribosylamino)methylideneamino] imidazole-4-carboxamide isomerase (258 aa).

Residue Asp9 is the Proton acceptor of the active site. The active-site Proton donor is the Asp131.

Belongs to the HisA/HisF family.

It is found in the cytoplasm. The enzyme catalyses 1-(5-phospho-beta-D-ribosyl)-5-[(5-phospho-beta-D-ribosylamino)methylideneamino]imidazole-4-carboxamide = 5-[(5-phospho-1-deoxy-D-ribulos-1-ylimino)methylamino]-1-(5-phospho-beta-D-ribosyl)imidazole-4-carboxamide. Its pathway is amino-acid biosynthesis; L-histidine biosynthesis; L-histidine from 5-phospho-alpha-D-ribose 1-diphosphate: step 4/9. The protein is 1-(5-phosphoribosyl)-5-[(5-phosphoribosylamino)methylideneamino] imidazole-4-carboxamide isomerase of Salinibacter ruber (strain DSM 13855 / M31).